The chain runs to 98 residues: Citrate lyase acyl carrier protein (98 aa).

An O-(phosphoribosyl dephospho-coenzyme A)serine modification is found at Ser-14.

It belongs to the CitD family. Oligomer with a subunit composition of (alpha,beta,gamma)6.

The protein resides in the cytoplasm. Its function is as follows. Covalent carrier of the coenzyme of citrate lyase. This chain is Citrate lyase acyl carrier protein, found in Shigella boydii serotype 4 (strain Sb227).